The chain runs to 336 residues: UPF0324 membrane protein PM1461 (336 aa).

10 helical membrane passes run 5 to 23 (TLFL…VNLL), 30 to 52 (LNAN…NTFY), 62 to 84 (GVIF…RLTL), 91 to 113 (GINA…LWLG), 123 to 140 (IVYL…AAIM), 153 to 175 (VSIA…PLMY), 221 to 238 (MIRV…SWLL), 250 to 271 (ISIP…FSLI), 275 to 297 (IVAW…LGLT), and 310 to 332 (PLIL…NVGI).

The protein belongs to the UPF0324 family.

The protein localises to the cell membrane. The polypeptide is UPF0324 membrane protein PM1461 (Pasteurella multocida (strain Pm70)).